The sequence spans 359 residues: Uroporphyrinogen decarboxylase (359 aa).

Coproporphyrinogen III-binding residues include Arg-28, Ala-30, Arg-32, Asp-79, Tyr-157, Ser-212, and His-335.

It belongs to the uroporphyrinogen decarboxylase family. Monomer.

It localises to the nucleus. It is found in the cytoplasm. It catalyses the reaction uroporphyrinogen III + 4 H(+) = coproporphyrinogen III + 4 CO2. The catalysed reaction is uroporphyrinogen I + 4 H(+) = coproporphyrinogen I + 4 CO2. Its pathway is porphyrin-containing compound metabolism; protoporphyrin-IX biosynthesis; coproporphyrinogen-III from 5-aminolevulinate: step 4/4. Functionally, catalyzes the sequential decarboxylation of four acetate groups of uroporphyrinogen-III (octacarboxyporphyrin) to yield coproporphyrinogen-III (tetracarboxyporphyrin) with the formation of intermediate hepta-, hexa- and penta-carboxylate porphyrinogens in the heme biosynthesis pathway. Acts on a number of porphyrinogens, but only coproporphyrinogen III can ultimately be converted to heme. The sequence is that of Uroporphyrinogen decarboxylase (hem12) from Schizosaccharomyces pombe (strain 972 / ATCC 24843) (Fission yeast).